The chain runs to 371 residues: Ferrochelatase (371 aa).

Residues H218 and E299 each contribute to the Fe cation site.

The protein belongs to the ferrochelatase family.

Its subcellular location is the cytoplasm. The enzyme catalyses heme b + 2 H(+) = protoporphyrin IX + Fe(2+). The protein operates within porphyrin-containing compound metabolism; protoheme biosynthesis; protoheme from protoporphyrin-IX: step 1/1. In terms of biological role, catalyzes the ferrous insertion into protoporphyrin IX. The protein is Ferrochelatase of Cupriavidus pinatubonensis (strain JMP 134 / LMG 1197) (Cupriavidus necator (strain JMP 134)).